Reading from the N-terminus, the 542-residue chain is Glucans biosynthesis protein D (542 aa).

Residues 1 to 31 (MHRRNLLKASMAIAAYTGLSATGLLASRAWA) constitute a signal peptide (tat-type signal).

This sequence belongs to the OpgD/OpgG family. Post-translationally, predicted to be exported by the Tat system. The position of the signal peptide cleavage has not been experimentally proven.

Its subcellular location is the periplasm. The protein operates within glycan metabolism; osmoregulated periplasmic glucan (OPG) biosynthesis. Its function is as follows. Probably involved in the control of the structural glucose backbone of osmoregulated periplasmic glucans (OPGs). This chain is Glucans biosynthesis protein D, found in Pseudomonas fluorescens (strain Pf0-1).